Reading from the N-terminus, the 101-residue chain is Chaperone modulatory protein CbpM (101 aa).

This sequence belongs to the CbpM family.

Functionally, interacts with CbpA and inhibits both the DnaJ-like co-chaperone activity and the DNA binding activity of CbpA. Together with CbpA, modulates the activity of the DnaK chaperone system. Does not inhibit the co-chaperone activity of DnaJ. This is Chaperone modulatory protein CbpM from Salmonella agona (strain SL483).